The following is a 551-amino-acid chain: Arginine--tRNA ligase (551 aa).

The short motif at 123–133 (ANPTGPLTIGR) is the 'HIGH' region element.

The protein belongs to the class-I aminoacyl-tRNA synthetase family. Monomer.

The protein resides in the cytoplasm. It carries out the reaction tRNA(Arg) + L-arginine + ATP = L-arginyl-tRNA(Arg) + AMP + diphosphate. The protein is Arginine--tRNA ligase of Chlorobaculum parvum (strain DSM 263 / NCIMB 8327) (Chlorobium vibrioforme subsp. thiosulfatophilum).